A 451-amino-acid polypeptide reads, in one-letter code: Tubulin alpha-2 chain (451 aa).

A GTP-binding site is contributed by glutamine 11. Position 40 is an N6-acetyllysine (lysine 40). Residues glutamate 71, glycine 144, threonine 145, threonine 179, asparagine 206, and asparagine 228 each contribute to the GTP site. Position 71 (glutamate 71) interacts with Mg(2+). Residue glutamate 254 is part of the active site.

Belongs to the tubulin family. Dimer of alpha and beta chains. A typical microtubule is a hollow water-filled tube with an outer diameter of 25 nm and an inner diameter of 15 nM. Alpha-beta heterodimers associate head-to-tail to form protofilaments running lengthwise along the microtubule wall with the beta-tubulin subunit facing the microtubule plus end conferring a structural polarity. Microtubules usually have 13 protofilaments but different protofilament numbers can be found in some organisms and specialized cells. Mg(2+) is required as a cofactor. Undergoes a tyrosination/detyrosination cycle, the cyclic removal and re-addition of a C-terminal tyrosine residue by the enzymes tubulin tyrosine carboxypeptidase (TTCP) and tubulin tyrosine ligase (TTL), respectively. Post-translationally, acetylation of alpha chains at Lys-40 stabilizes microtubules and affects affinity and processivity of microtubule motors. This modification has a role in multiple cellular functions, ranging from cell motility, cell cycle progression or cell differentiation to intracellular trafficking and signaling.

The protein localises to the cytoplasm. It localises to the cytoskeleton. The catalysed reaction is GTP + H2O = GDP + phosphate + H(+). Its function is as follows. Tubulin is the major constituent of microtubules, a cylinder consisting of laterally associated linear protofilaments composed of alpha- and beta-tubulin heterodimers. Microtubules grow by the addition of GTP-tubulin dimers to the microtubule end, where a stabilizing cap forms. Below the cap, tubulin dimers are in GDP-bound state, owing to GTPase activity of alpha-tubulin. The sequence is that of Tubulin alpha-2 chain (TUBA) from Oryza sativa subsp. japonica (Rice).